The primary structure comprises 232 residues: MDRKAVEEKRIVISIGGGHATGVGAIALDLQNTFKSLYNSINIRVINLDNMIEGNIKSYNNNDYDFDNILNLVYEKHAVTSQNDMIQHDYEDPIDLIIVCGCYALYDKRINEISQLKVFLDSDADKRLISLIKKKNVGSNEQLAQLITEYMDHLRPEMQQYIEPTRTFADLIIPSTNENLGRAVLVDGIVKAIEDTKSQIEGNNTNNKIRPRLWDFEAETMDLEKDRYYDLS.

Residue 17 to 24 participates in ATP binding; it reads GGHATGVG.

The protein belongs to the uridine kinase family.

It is found in the cytoplasm. It localises to the nucleus. It catalyses the reaction uridine + ATP = UMP + ADP + H(+). The catalysed reaction is cytidine + ATP = CMP + ADP + H(+). The protein operates within pyrimidine metabolism; CTP biosynthesis via salvage pathway; CTP from cytidine: step 1/3. Its pathway is pyrimidine metabolism; UMP biosynthesis via salvage pathway; UMP from uridine: step 1/1. Its function is as follows. Putative uridine kinase identified in a screen for mutants with increased levels of rDNA transcription. In Saccharomyces cerevisiae (strain ATCC 204508 / S288c) (Baker's yeast), this protein is Putative uridine kinase DAS2 (DAS2).